Here is a 147-residue protein sequence, read N- to C-terminus: MDIAKIMGYLPHRYPFLLVDRILELTSEEIVGLKNVTINEPFFQGHFPGEPIMPGVLIIEALAQTGGVLAFTLVSDFRGKPIYFMGMDKVRFRKPVRPGDQLILKLKILKRRGPTFKMSAEAFVEEQLVAEAELLATIGAAKSEREA.

His46 is an active-site residue.

This sequence belongs to the thioester dehydratase family. FabZ subfamily.

The protein localises to the cytoplasm. It catalyses the reaction a (3R)-hydroxyacyl-[ACP] = a (2E)-enoyl-[ACP] + H2O. Functionally, involved in unsaturated fatty acids biosynthesis. Catalyzes the dehydration of short chain beta-hydroxyacyl-ACPs and long chain saturated and unsaturated beta-hydroxyacyl-ACPs. This chain is 3-hydroxyacyl-[acyl-carrier-protein] dehydratase FabZ, found in Syntrophobacter fumaroxidans (strain DSM 10017 / MPOB).